The chain runs to 628 residues: Chaperone protein HtpG (628 aa).

The a; substrate-binding stretch occupies residues 1-337 (MSEKKYTFET…SADLPLNVSR (337 aa)). Residues 338 to 554 (EILQHNKVID…DYGMSLHMQK (217 aa)) form a b region. The segment at 555 to 628 (MMEEAGQSFM…FVKLVNKYIR (74 aa)) is c.

This sequence belongs to the heat shock protein 90 family. As to quaternary structure, homodimer.

It is found in the cytoplasm. Its function is as follows. Molecular chaperone. Has ATPase activity. This is Chaperone protein HtpG from Francisella tularensis subsp. tularensis (strain FSC 198).